The sequence spans 417 residues: Acetyltransferase nanB (417 aa).

An N-terminal signal peptide occupies residues 1–24 (MRPSTTTLSLLVFLISSILLATTG). 5 helical membrane passes run 150–170 (LAVS…LKNI), 284–304 (YLNN…FNWI), 307–327 (VQDG…GYFL), 356–376 (VGAL…VYPF), and 389–409 (FVDV…AAAL).

It belongs to the wax synthase family.

The protein resides in the membrane. It functions in the pathway secondary metabolite biosynthesis. Functionally, acetyltransferase; part of the gene cluster that mediates the biosynthesis of the benzazepine alkaloid nanangelenin A which contains an unprecedented 3,4-dihydro-1-benzazepine-2,5-dione-N-prenyl-N-acetoxy-anthranilamide scaffold. The first step of nanangelenin biosynthesis is catalyzed by the indoleamine 2,3-dioxygenase nanC which produces N-formyl-kynurenine through the catabolism of tryptophan. The two-module NRPS nanA then utilizes anthranilate (Ant) and L-kynurenine (L-Kyn) to assemble the dipeptide product nanangelenin B. The first adenylation domain of nanA (A1) loads anthranilate onto the T1 domain, while A2 loads kynurenine, generated through spontaneous nonenzymatic deformylation of the nanC-supplied N-formyl-kynurenine. The peptide bond formation between the tethered amino acids is catalyzed by the first condensation domain (C1) between anthranilate's carbonyl carbon and kynurenine's aliphatic primary amine. The second C domain (C2) catalyzes the final cyclization event between the aromatic amine of kynurenine and the tethered carbonyl carbon, yielding nanangelenin B. The terminal T3 domain enhances the catalytic efficiency of C2, suggesting the T2-tethered Ant-L-Kyn is transferred to T3 prior to cyclization by C2. Once released from nanA, nanangelenin B is then prenylated by the prenyltransferase nanD to form nanangelenin C. Nanangelenin C is then N-hydroxylated by the FAD-dependent monooxygenase nanF and further acetylated by the acetyltransferase nanB to yield nanangelenin F. Finally, the N-methyltransferase nanE methylates the amide nitrogen of 1-benzazepine to convert nanangelenin F into nanangelenin A. NanE is also able to methylate most of the intermediates of the pathway such as nanangelenin B and nanangelenin C to produce nanangelenin D and nanangelenin E, respectively. This is Acetyltransferase nanB from Aspergillus nanangensis.